A 291-amino-acid chain; its full sequence is uncharacterized protein (291 aa).

Helical transmembrane passes span 42 to 62 (IFFF…RALW) and 86 to 106 (TIFP…LALD).

Belongs to the cytochrome c oxidase subunit 2 family.

It localises to the mitochondrion membrane. This is an uncharacterized protein from Arabidopsis thaliana (Mouse-ear cress).